A 287-amino-acid chain; its full sequence is Hydroxysteroid 11-beta-dehydrogenase 1-like protein (287 aa).

The N-terminal stretch at 1–20 (MMKPFGKVLCAAGSLAVLLA) is a signal peptide. Residues 41-67 (GASA…TARR), 92-93 (DM), and 119-121 (NHI) contribute to the NADP(+) site. Ser-170 serves as a coordination point for substrate. Residue Tyr-183 is the Proton acceptor of the active site. NADP(+) is bound by residues 183–187 (YSATK) and 216–222 (GLIDTDA).

It belongs to the short-chain dehydrogenases/reductases (SDR) family.

The protein resides in the secreted. It catalyses the reaction cortisone + NADPH + H(+) = cortisol + NADP(+). In terms of biological role, unidirectional NADP(+)-dependent cortisol dehydrogenase (in vitro). In Gallus gallus (Chicken), this protein is Hydroxysteroid 11-beta-dehydrogenase 1-like protein (HSD11B1L).